The following is a 53-amino-acid chain: Large ribosomal subunit protein bL33 (53 aa).

It belongs to the bacterial ribosomal protein bL33 family.

The sequence is that of Large ribosomal subunit protein bL33 from Ureaplasma parvum serovar 3 (strain ATCC 27815 / 27 / NCTC 11736).